The following is a 482-amino-acid chain: MATLESPGMDDQAGDTETEALQSARWLYCGEPDDRQKAVLVQFSNGKLQNPGDMRFTLYNSTDLVNPRQRSHRIVAAETDRLSYVGNNFGTGALKCNALCRHFVGILNKTSGQMEVYDAELFNMQPLFAGMGTEVIKLGGQHLYLLAFCQPSKNLAEAGDLLLSRHRQGHCIAVLLDDDAIEREPPLENQNKTFRDKLDSCIEAFGSTKQKRSLNSRRMNKVGSESLNLSVAKAAESIIDTKGVNALVSDAMQDDLQDGVLYLPPCYADAAKPEDVYRFEDILSPAEYDALESPSEAFRKVTSEDILKMIEENSHCSYVIEMLKSLPIDEVHRNRQARSIWFLDALIRFRAQKVIKGKRALGPGIPHIINTKLLKQFTCLTYNNGRLQNLISSSMRAKITSYAIILALHINNFQVDLTALQKDLKLSEKRMIEIAKAMRLKISKQKVSLADGREESHRLGTLSVPLPPAQNSDRQSKRRKMN.

Residue Ser226 is modified to Phosphoserine. Residue Lys436 is modified to N6-acetyllysine. Residues 460–482 (GTLSVPLPPAQNSDRQSKRRKMN) form a disordered region.

The protein belongs to the eukaryotic RPA49/POLR1E RNA polymerase subunit family. In terms of assembly, component of the RNA polymerase I (Pol I) complex consisting of 13 subunits: a ten-subunit catalytic core composed of POLR1A/RPA1, POLR1B/RPA2, POLR1C/RPAC1, POLR1D/RPAC2, POLR1H/RPA12, POLR2E/RPABC1, POLR2F/RPABC2, POLR2H/RPABC3, POLR2K/RPABC4 and POLR2L/RPABC5; a mobile stalk subunit POLR1F/RPA43 protruding from the core and additional subunits homologous to general transcription factors POLR1E/RPA49 and POLR1G/RPA34. Forms a heterodimer with POLR1G/RPA34. Interacts with POLR1G. Also binds UBTF/UBF. Interacts with PWP1. Acetylated at Lys-436 by CREBBP/CBP, leading to decreased RNA polymerase I transcription. In normal conditions, deacetylated by SIRT7, promoting the association of RNA polymerase I with the rDNA promoter region and coding region. In response to stress, SIRT7 is released from nucleoli leading to hyperacetylation of POLR1E/PAF53 and decreased association of RNA polymerase I with the rDNA promoter region.

It localises to the nucleus. It is found in the nucleolus. In terms of biological role, component of RNA polymerase I (Pol I), a DNA-dependent RNA polymerase which synthesizes ribosomal RNA precursors using the four ribonucleoside triphosphates as substrates. Appears to be involved in the formation of the initiation complex at the promoter by mediating the interaction between Pol I and UBTF/UBF. This is DNA-directed RNA polymerase I subunit RPA49 (Polr1e) from Mus musculus (Mouse).